Consider the following 138-residue polypeptide: Small ribosomal subunit protein bS6 (138 aa).

The disordered stretch occupies residues 94-138 (VKQDGPLPTPKPTSKENEPEKEEVKPTEEKTESPSKDEKKEDSKE). Basic and acidic residues predominate over residues 106–138 (TSKENEPEKEEVKPTEEKTESPSKDEKKEDSKE).

This sequence belongs to the bacterial ribosomal protein bS6 family.

In terms of biological role, binds together with bS18 to 16S ribosomal RNA. This Prochlorococcus marinus (strain NATL2A) protein is Small ribosomal subunit protein bS6.